The chain runs to 316 residues: DNA-directed RNA polymerase III subunit RPC6 (316 aa).

Alanine 2 is modified (N-acetylalanine). Glycyl lysine isopeptide (Lys-Gly) (interchain with G-Cter in SUMO2) cross-links involve residues lysine 5 and lysine 7. Residues cysteine 287, cysteine 290, cysteine 296, and cysteine 307 each coordinate [4Fe-4S] cluster.

This sequence belongs to the eukaryotic RPC34/RPC39 RNA polymerase subunit family. In terms of assembly, component of the RNA polymerase III complex consisting of 17 subunits: a ten-subunit horseshoe-shaped catalytic core composed of POLR3A/RPC1, POLR3B/RPC2, POLR1C/RPAC1, POLR1D/RPAC2, POLR3K/RPC10, POLR2E/RPABC1, POLR2F/RPABC2, POLR2H/RPABC3, POLR2K/RPABC4 and POLR2L/RPABC5; a mobile stalk composed of two subunits POLR3H/RPC8 and CRCP/RPC9, protruding from the core and functioning primarily in transcription initiation; and additional subunits homologous to general transcription factors of the RNA polymerase II machinery, POLR3C/RPC3-POLR3F/RPC6-POLR3G/RPC7 heterotrimer required for transcription initiation and POLR3D/RPC4-POLR3E/RPC5 heterodimer involved in both transcription initiation and termination. Directly interacts with POLR3C. Interacts with TBP and TFIIIB90 and GTF3C4. Interacts with MAF1. As part of the RNA polymerase III complex, interacts with PKP2.

The protein resides in the nucleus. Its function is as follows. DNA-dependent RNA polymerase catalyzes the transcription of DNA into RNA using the four ribonucleoside triphosphates as substrates. Specific peripheric component of RNA polymerase III (Pol III) which synthesizes small non-coding RNAs including 5S rRNA, snRNAs, tRNAs and miRNAs from at least 500 distinct genomic loci. Part of POLR3C/RPC3-POLR3F/RPC6-POLR3G/RPC7 heterotrimer that coordinates the dynamics of Pol III stalk and clamp modules during the transition from apo to elongation state. Pol III plays a key role in sensing and limiting infection by intracellular bacteria and DNA viruses, including varicella zoster virus. Acts as a nuclear and cytosolic DNA sensor detecting AT-rich DNA, involved in innate immune response. Can sense non-self dsDNA that serves as template for transcription into dsRNA. The non-self RNA polymerase III transcripts, such as Epstein-Barr virus-encoded RNAs (EBERs) induce type I interferon and NF-kappa-B through the RIG-I pathway. Preferentially binds double-stranded DNA (dsDNA). This Bos taurus (Bovine) protein is DNA-directed RNA polymerase III subunit RPC6 (POLR3F).